A 314-amino-acid polypeptide reads, in one-letter code: Zinc transporter ZIP3 (314 aa).

The Extracellular portion of the chain corresponds to 1-3 (MVK). A helical transmembrane segment spans residues 4–24 (LLVAKILCMVGMFFFMLLGSL). Residues 25 to 42 (LPVKIIEMDFEKAHRSKK) are Cytoplasmic-facing. The helical transmembrane segment at 43 to 63 (ILSLCNTFGGGVFLATCFNAL) threads the bilayer. Over 64-85 (LPAVREKLKEVLTLAHISTDYP) the chain is Extracellular. Residues 86–106 (LAETIMLLGFFMTVFLEQLVL) traverse the membrane as a helical segment. The Cytoplasmic segment spans residues 107 to 169 (TFRKERPAFI…QELSRSSPLR (63 aa)). Residues S125 and S129 each carry the phosphoserine modification. Residues 170–190 (LLSLVFALSAHSVFEGLALGL) traverse the membrane as a helical segment. Over 191 to 196 (QEEGEK) the chain is Extracellular. A helical membrane pass occupies residues 197–217 (VVSLFVGVAIHETLVAVALGI). Topologically, residues 218-229 (NMARSAMALRDA) are cytoplasmic. A helical membrane pass occupies residues 230-250 (AKLAVTVSAMIPLGISLGLGI). The Extracellular segment spans residues 251–262 (DSAQGMPSSVAS). A helical membrane pass occupies residues 263–283 (VLLQGLAGGTFLFVTFFEILA). The Cytoplasmic portion of the chain corresponds to 284–292 (KELEEKSDR). The chain crosses the membrane as a helical span at residues 293 to 313 (LLKVLFLVLGYTVLAGMVFIK). Residue W314 is a topological domain, extracellular.

Belongs to the ZIP transporter (TC 2.A.5) family.

The protein resides in the cell membrane. It is found in the apical cell membrane. It carries out the reaction Zn(2+)(in) = Zn(2+)(out). In terms of biological role, transporter for the divalent cation Zn(2+). Mediates the influx of Zn(2+) into cells from extracellular space. Controls Zn(2+) accumulation into dentate gyrus granule cells in the hippocampus. Mediates Zn(2+) reuptake from the secreted milk within the alveolar lumen. In Bos taurus (Bovine), this protein is Zinc transporter ZIP3 (SLC39A3).